The sequence spans 302 residues: Methylsterol monooxygenase erg25A (302 aa).

N-linked (GlcNAc...) asparagine glycosylation is present at Asn5. Helical transmembrane passes span 47–67 (NIVATATGIITFLAHEIIYFS), 105–125 (YILLIHFVVELPLIVLFHPMM), and 132–152 (FTIPFPDLRTLTAQIIIFFLL). The Fatty acid hydroxylase domain maps to 147-283 (IIFFLLEDTY…FRHWDVLMGT (137 aa)). Residues 161-165 (HRAMH) carry the Histidine box-1 motif. Residues 174–178 (HRIHH) carry the Histidine box-2 motif. Residues 193–213 (PWETLLLGLGTIGPPLLLALM) form a helical membrane-spanning segment. The Histidine box-3 motif lies at 258–264 (WHDDHHR). The N-linked (GlcNAc...) asparagine glycan is linked to Asn269.

This sequence belongs to the sterol desaturase family. The cofactor is Fe cation.

It localises to the endoplasmic reticulum membrane. It participates in steroid metabolism; ergosterol biosynthesis. Its function is as follows. Sterol-C4-methyl oxidase; part of the third module of ergosterol biosynthesis pathway that includes the late steps of the pathway. Erg25A is a catalytic component of the C-4 demethylation complex that catalyzes the conversion of 4,4-dimethylfecosterol into fecosterol via 4-methylfecosterol. The third module or late pathway involves the ergosterol synthesis itself through consecutive reactions that mainly occur in the endoplasmic reticulum (ER) membrane. Firstly, the squalene synthase erg9 catalyzes the condensation of 2 farnesyl pyrophosphate moieties to form squalene, which is the precursor of all steroids. Squalene synthase is crucial for balancing the incorporation of farnesyl diphosphate (FPP) into sterol and nonsterol isoprene synthesis. Secondly, squalene is converted into lanosterol by the consecutive action of the squalene epoxidase erg1 and the lanosterol synthase erg7. Then, the delta(24)-sterol C-methyltransferase erg6 methylates lanosterol at C-24 to produce eburicol. Eburicol is the substrate of the sterol 14-alpha demethylase encoded by cyp51A and cyp51B, to yield 4,4,24-trimethyl ergosta-8,14,24(28)-trienol. The C-14 reductase erg24 then reduces the C14=C15 double bond which leads to 4,4-dimethylfecosterol. A sequence of further demethylations at C-4, involving the C-4 demethylation complex containing the C-4 methylsterol oxidases erg25A or erg25B, the sterol-4-alpha-carboxylate 3-dehydrogenase erg26 and the 3-keto-steroid reductase erg27, leads to the production of fecosterol via 4-methylfecosterol. The C-8 sterol isomerase erg2 then catalyzes the reaction which results in unsaturation at C-7 in the B ring of sterols and thus converts fecosterol to episterol. The sterol-C5-desaturase erg3B then catalyzes the introduction of a C-5 double bond in the B ring to produce 5-dehydroepisterol. The 2 other sterol-C5-desaturases, erg3A and erg3C, seem to be less important in ergosterol biosynthesis. The C-22 sterol desaturase erg5 further converts 5-dehydroepisterol into ergosta-5,7,22,24(28)-tetraen-3beta-ol by forming the C-22(23) double bond in the sterol side chain. Finally, ergosta-5,7,22,24(28)-tetraen-3beta-ol is substrate of the C-24(28) sterol reductases erg4A and erg4B to produce ergosterol. Possible alternative sterol biosynthetic pathways might exist from fecosterol to ergosterol, depending on the activities of the erg3 isoforms. In Aspergillus fumigatus (strain ATCC MYA-4609 / CBS 101355 / FGSC A1100 / Af293) (Neosartorya fumigata), this protein is Methylsterol monooxygenase erg25A.